The primary structure comprises 143 residues: Mannitol-specific phosphotransferase enzyme IIA component (143 aa).

The PTS EIIA type-2 domain occupies 2–142 (QVLAKENIKL…EDLIAIFNEV (141 aa)). His62 serves as the catalytic Tele-phosphohistidine intermediate. Residue His62 is modified to Phosphohistidine; by HPr. Residue Ser74 is modified to Phosphoserine.

It is found in the cytoplasm. The phosphoenolpyruvate-dependent sugar phosphotransferase system (sugar PTS), a major carbohydrate active transport system, catalyzes the phosphorylation of incoming sugar substrates concomitantly with their translocation across the cell membrane. The enzyme II CmtAB PTS system is involved in D-mannitol transport. This Bacillus subtilis (strain 168) protein is Mannitol-specific phosphotransferase enzyme IIA component (mtlF).